The sequence spans 283 residues: Circadian clock oscillator protein KaiA (283 aa).

The interval 1-146 (MAQSTALTIC…LFRLPALKES (146 aa)) is psR domain, not required to form KaiA:KaiB:KaiC complex, or for a full KaiC phosphorylation cycle. A KaiA N-terminal domain is found at 3–163 (QSTALTICGL…RLSQKLKERL (161 aa)). Residues 164 to 172 (GYLGVYYKR) are flexible linker. One can recognise a KaiA C-terminal domain in the interval 173–281 (DTAFFFRRMS…CEMYRRSIPR (109 aa)).

The protein belongs to the KaiA family. In terms of assembly, homodimer. The KaiABC complex composition changes during the circadian cycle to control KaiC phosphorylation. Complexes KaiC(6), KaiA(2-4):KaiC(6), KaiB(6):KaiC(6) and KaiC(6):KaiB(6):KaiA(12) are among the most important forms, many form cooperatively. Binds to KaiB and KaiC, the N-terminus (pseudoreceiver domain PsR) is not required for either interaction. 1 KaiB binds to one subunit of the KaiA homodimer. KaiA and CikA bind to the same region of the KaiB(fs) form and therefore compete.

Its function is as follows. Key component of the KaiABC oscillator complex, which constitutes the main circadian regulator in cyanobacteria. Complex composition changes during the circadian cycle to control KaiC phosphorylation. KaiA stimulates KaiC autophosphorylation, while KaiB sequesters KaiA, leading to KaiC autodephosphorylation. KaiA binding to the KaiC CII domain during the subjective day yields KaiA(2-4):KaiC(6) complexes which stimulate KaiC autophosphorylation. Phospho-Ser-431 KaiC accumulation triggers binding of KaiB during the subjective night to form the KaiB(6):KaiC(6) complex, leading to changes in the output regulators CikA and SasA. KaiB(6):KaiC(6) formation exposes a site for KaiA binding on KaiB that sequesters KaiA from KaiC's CII domain, making the KaiC(6):KaiB(6):KaiA(12) complex resulting in KaiC autodephosphorylation. Complete dephosphorylation of KaiC leads to dissociation of KaiA(2):KaiB(1), completing 1 cycle of the Kai oscillator. Formation of the KaiB:KaiC complex is promoted by KaiA, helping switch KaiC from its autophosphorylation to autodephosphatase function. Functionally, binds oxidized quinones via the N-terminal PsR domain, allowing it to sense redox changes and possibly mediate clock input. The polypeptide is Circadian clock oscillator protein KaiA (Thermosynechococcus vestitus (strain NIES-2133 / IAM M-273 / BP-1)).